We begin with the raw amino-acid sequence, 283 residues long: Urease accessory protein UreD 2 (283 aa).

Over residues 1-11 (MGRRAPDRLDR) the composition is skewed to basic and acidic residues. Residues 1-30 (MGRRAPDRLDRGVTTTSPRTQAPPQAGRGV) are disordered. Polar residues predominate over residues 13–23 (VTTTSPRTQAP).

It belongs to the UreD family. In terms of assembly, ureD, UreF and UreG form a complex that acts as a GTP-hydrolysis-dependent molecular chaperone, activating the urease apoprotein by helping to assemble the nickel containing metallocenter of UreC. The UreE protein probably delivers the nickel.

The protein localises to the cytoplasm. Its function is as follows. Required for maturation of urease via the functional incorporation of the urease nickel metallocenter. This Saccharopolyspora erythraea (strain ATCC 11635 / DSM 40517 / JCM 4748 / NBRC 13426 / NCIMB 8594 / NRRL 2338) protein is Urease accessory protein UreD 2.